The following is a 417-amino-acid chain: Fatty-acid peroxygenase (417 aa).

Position 363 (C363) interacts with heme.

Belongs to the cytochrome P450 family. The cofactor is heme.

It catalyses the reaction a 1,2-saturated fatty acid + H2O2 = a 2-hydroxy fatty acid + H2O. The enzyme catalyses a 2,3-saturated fatty acid + H2O2 = a 3-hydroxy fatty acid + H2O. The catalysed reaction is tetradecanoate + H2O2 = (3R)-hydroxytetradecanoate + H2O. It carries out the reaction tetradecanoate + H2O2 = (2R)-hydroxytetradecanoate + H2O. It catalyses the reaction tetradecanoate + H2O2 = (2S)-hydroxytetradecanoate + H2O. Catalyzes the alpha- and beta-hydroxylation of myristic acid in the presence of hydrogen peroxide. The chain is Fatty-acid peroxygenase (cypC) from Bacillus subtilis (strain 168).